Reading from the N-terminus, the 140-residue chain is uncharacterized protein (140 aa).

18 to 25 (GTNGSGKS) lines the ATP pocket.

This is an uncharacterized protein from Haemophilus influenzae (strain ATCC 51907 / DSM 11121 / KW20 / Rd).